The primary structure comprises 319 residues: Acetyl-coenzyme A carboxylase carboxyl transferase subunit alpha (319 aa).

Positions Asp-35 to Asp-296 constitute a CoA carboxyltransferase C-terminal domain.

Belongs to the AccA family. In terms of assembly, acetyl-CoA carboxylase is a heterohexamer composed of biotin carboxyl carrier protein (AccB), biotin carboxylase (AccC) and two subunits each of ACCase subunit alpha (AccA) and ACCase subunit beta (AccD).

It localises to the cytoplasm. The enzyme catalyses N(6)-carboxybiotinyl-L-lysyl-[protein] + acetyl-CoA = N(6)-biotinyl-L-lysyl-[protein] + malonyl-CoA. Its pathway is lipid metabolism; malonyl-CoA biosynthesis; malonyl-CoA from acetyl-CoA: step 1/1. Its function is as follows. Component of the acetyl coenzyme A carboxylase (ACC) complex. First, biotin carboxylase catalyzes the carboxylation of biotin on its carrier protein (BCCP) and then the CO(2) group is transferred by the carboxyltransferase to acetyl-CoA to form malonyl-CoA. The chain is Acetyl-coenzyme A carboxylase carboxyl transferase subunit alpha from Vibrio cholerae serotype O1 (strain ATCC 39541 / Classical Ogawa 395 / O395).